The chain runs to 450 residues: Beta-glucosidase (450 aa).

Residue E166 is the Proton donor of the active site. Residue E355 is the Nucleophile of the active site.

It belongs to the glycosyl hydrolase 1 family.

The enzyme catalyses Hydrolysis of terminal, non-reducing beta-D-glucosyl residues with release of beta-D-glucose.. The chain is Beta-glucosidase (bglA) from Niallia circulans (Bacillus circulans).